The following is a 542-amino-acid chain: Nif-specific regulatory protein (542 aa).

The region spanning 29–170 (DLSKTLREVL…MVANLIGQTV (142 aa)) is the GAF domain. In terms of domain architecture, Sigma-54 factor interaction spans 203 to 432 (VIGISKAMQE…LENCVERTAT (230 aa)). Residues 231–238 (GESGTGKE) and 294–303 (AHGGTLFLDE) each bind ATP. Residues 433-499 (MMRGDLITEV…ATGAAPPTSE (67 aa)) are inter-domain linker. Residues cysteine 446 and cysteine 451 each coordinate a divalent metal cation. The tract at residues 500-542 (RERLIWAMEQCGWVQAKAARALNISPRQMGYALQKFNIEVKKF) is C-terminal DNA-binding domain. The H-T-H motif DNA-binding region spans 514-533 (QAKAARALNISPRQMGYALQ).

In terms of assembly, interacts with sigma-54.

Required for activation of most nif operons, which are directly involved in nitrogen fixation. This chain is Nif-specific regulatory protein (nifA), found in Herbaspirillum seropedicae.